The following is a 72-amino-acid chain: Large ribosomal subunit protein bL31 (72 aa).

4 residues coordinate Zn(2+): Cys16, Cys18, Cys38, and Cys41.

Belongs to the bacterial ribosomal protein bL31 family. Type A subfamily. In terms of assembly, part of the 50S ribosomal subunit. It depends on Zn(2+) as a cofactor.

Its function is as follows. Binds the 23S rRNA. The chain is Large ribosomal subunit protein bL31 from Vibrio campbellii (strain ATCC BAA-1116).